The sequence spans 202 residues: Oocyte-secreted protein 1 (202 aa).

Residues 1–21 (MKPFVGLLGLLLLLSFMKTCA) form the signal peptide. Residues 157-183 (QPNLSTSSEDHHVSTEPWASETSRSEA) are disordered.

The protein belongs to the PLAC1 family. In terms of tissue distribution, expressed in oocytes in primary through antral-stage follicles. Expressed in liver and ovary.

It localises to the secreted. In terms of biological role, may be involved in cell differentiation. The chain is Oocyte-secreted protein 1 (Oosp1) from Mus musculus (Mouse).